The sequence spans 444 residues: Bifunctional enolase 2/transcriptional activator (444 aa).

Residues His163 and Glu172 each coordinate substrate. Glu215 functions as the Proton donor in the catalytic mechanism. Mg(2+)-binding residues include Asp250, Glu300, and Asp327. 2 residues coordinate substrate: Glu300 and Asp327. Lys352 functions as the Proton acceptor in the catalytic mechanism. Residues Ser379–Ser382 and Lys403 each bind substrate.

The protein belongs to the enolase family. As to quaternary structure, homodimer. Mg(2+) serves as cofactor.

Its subcellular location is the cytoplasm. It is found in the cytosol. It localises to the nucleus. The protein localises to the mitochondrion outer membrane. The catalysed reaction is (2R)-2-phosphoglycerate = phosphoenolpyruvate + H2O. Its pathway is carbohydrate degradation; glycolysis; pyruvate from D-glyceraldehyde 3-phosphate: step 4/5. In terms of biological role, multifunctional enzyme that acts as an enolase involved in the metabolism and as a positive regulator of cold-responsive gene transcription. Binds to the cis-element the gene promoter of STZ/ZAT10, a zinc finger transcriptional repressor. This chain is Bifunctional enolase 2/transcriptional activator (ENO2), found in Arabidopsis thaliana (Mouse-ear cress).